Consider the following 225-residue polypeptide: 7-cyano-7-deazaguanine synthase (225 aa).

10-20 (FSGGQDSTTLA) serves as a coordination point for ATP. Residues Cys190, Cys205, Cys208, and Cys211 each contribute to the Zn(2+) site.

It belongs to the QueC family. Zn(2+) is required as a cofactor.

It catalyses the reaction 7-carboxy-7-deazaguanine + NH4(+) + ATP = 7-cyano-7-deazaguanine + ADP + phosphate + H2O + H(+). It functions in the pathway purine metabolism; 7-cyano-7-deazaguanine biosynthesis. Functionally, catalyzes the ATP-dependent conversion of 7-carboxy-7-deazaguanine (CDG) to 7-cyano-7-deazaguanine (preQ(0)). The polypeptide is 7-cyano-7-deazaguanine synthase (Helicobacter acinonychis (strain Sheeba)).